Consider the following 220-residue polypeptide: Response regulator ArlR (220 aa).

A Response regulatory domain is found at Lys3–Leu116. Asp52 bears the 4-aspartylphosphate mark. Positions Lys122 to Gln220 form a DNA-binding region, ompR/PhoB-type.

Phosphorylated by ArlS.

It is found in the cytoplasm. Functionally, member of the two-component regulatory system ArlS/ArlR. This Staphylococcus saprophyticus subsp. saprophyticus (strain ATCC 15305 / DSM 20229 / NCIMB 8711 / NCTC 7292 / S-41) protein is Response regulator ArlR (arlR).